The sequence spans 438 residues: Enolase (438 aa).

Gln174 contributes to the (2R)-2-phosphoglycerate binding site. Glu216 functions as the Proton donor in the catalytic mechanism. Asp253, Glu297, and Asp324 together coordinate Mg(2+). Residues Lys349, Arg378, Ser379, and Lys400 each contribute to the (2R)-2-phosphoglycerate site. Lys349 (proton acceptor) is an active-site residue.

The protein belongs to the enolase family. As to quaternary structure, component of the RNA degradosome, a multiprotein complex involved in RNA processing and mRNA degradation. The cofactor is Mg(2+).

It is found in the cytoplasm. It localises to the secreted. The protein localises to the cell surface. It catalyses the reaction (2R)-2-phosphoglycerate = phosphoenolpyruvate + H2O. It participates in carbohydrate degradation; glycolysis; pyruvate from D-glyceraldehyde 3-phosphate: step 4/5. Its function is as follows. Catalyzes the reversible conversion of 2-phosphoglycerate (2-PG) into phosphoenolpyruvate (PEP). It is essential for the degradation of carbohydrates via glycolysis. This Psychrobacter cryohalolentis (strain ATCC BAA-1226 / DSM 17306 / VKM B-2378 / K5) protein is Enolase.